Here is a 520-residue protein sequence, read N- to C-terminus: Probable helicase MJECL08 (520 aa).

Residues arginine 162, 171 to 176, and 501 to 502 each bind ATP; these read GAGKSN and KI.

Belongs to the HerA family.

The enzyme catalyses Couples ATP hydrolysis with the unwinding of duplex DNA at the replication fork by translocating in the 5'-3' direction. This creates two antiparallel DNA single strands (ssDNA). The leading ssDNA polymer is the template for DNA polymerase III holoenzyme which synthesizes a continuous strand.. It catalyses the reaction ATP + H2O = ADP + phosphate + H(+). It carries out the reaction Couples ATP hydrolysis with the unwinding of duplex DNA by translocating in the 3'-5' direction.. Its function is as follows. A probably bidirectional DNA helicase. The chain is Probable helicase MJECL08 from Methanocaldococcus jannaschii (strain ATCC 43067 / DSM 2661 / JAL-1 / JCM 10045 / NBRC 100440) (Methanococcus jannaschii).